A 29-amino-acid chain; its full sequence is uncharacterized protein (29 aa).

A helical transmembrane segment spans residues 8–28 (FALIVVLFILLIIVGTAFVGG).

This sequence belongs to the SscA family.

The protein resides in the membrane. This is an uncharacterized protein from Bacillus subtilis (strain 168).